The sequence spans 270 residues: Orotidine 5'-phosphate decarboxylase (270 aa).

Lysine 95 acts as the Proton donor in catalysis.

The protein belongs to the OMP decarboxylase family. Type 2 subfamily.

The enzyme catalyses orotidine 5'-phosphate + H(+) = UMP + CO2. Its pathway is pyrimidine metabolism; UMP biosynthesis via de novo pathway; UMP from orotate: step 2/2. In Azoarcus sp. (strain BH72), this protein is Orotidine 5'-phosphate decarboxylase.